Reading from the N-terminus, the 154-residue chain is NADPH-dependent 7-cyano-7-deazaguanine reductase (154 aa).

Over residues 1–13 the composition is skewed to polar residues; sequence MSVTDVSGLSQLG. Residues 1–30 are disordered; that stretch reads MSVTDVSGLSQLGTKVDTPESPEKAVLEKV. A compositionally biased stretch (basic and acidic residues) spans 17-27; sequence DTPESPEKAVL. Cysteine 52 serves as the catalytic Thioimide intermediate. Aspartate 59 functions as the Proton donor in the catalytic mechanism. Substrate-binding positions include 74-76 and 93-94; these read VES and HE.

It belongs to the GTP cyclohydrolase I family. QueF type 1 subfamily.

It is found in the cytoplasm. The catalysed reaction is 7-aminomethyl-7-carbaguanine + 2 NADP(+) = 7-cyano-7-deazaguanine + 2 NADPH + 3 H(+). It functions in the pathway tRNA modification; tRNA-queuosine biosynthesis. Catalyzes the NADPH-dependent reduction of 7-cyano-7-deazaguanine (preQ0) to 7-aminomethyl-7-deazaguanine (preQ1). The protein is NADPH-dependent 7-cyano-7-deazaguanine reductase of Agrobacterium fabrum (strain C58 / ATCC 33970) (Agrobacterium tumefaciens (strain C58)).